The following is a 562-amino-acid chain: Glucocorticoid modulatory element-binding protein 1 (562 aa).

A2 is subject to N-acetylalanine. One can recognise an SAND domain in the interval 72–156 (ASSIEANEDM…RKMMDSGQID (85 aa)). A Zn(2+)-binding site is contributed by C103. K129, K133, K136, and R147 together coordinate DNA. 3 residues coordinate Zn(2+): H160, C164, and C168. A coiled-coil region spans residues 311 to 357 (LDNRRKQVEHGEEQFLYTLADLERQLEEQKKQAQDPRLKSQTVQNVV). The tract at residues 360–384 (PVSTPKPPKRPRLQRPASTTVLSPS) is disordered. The span at 375 to 384 (PASTTVLSPS) shows a compositional bias: polar residues.

As to quaternary structure, homodimer, and heterodimer of GMEB1 and GMEB2. Interacts with the glucocorticoid receptor (NR3C1) and NCOA2/TIF2. May interact with HSP27 and CREB-binding protein (CBP). Interacts with TRIM63.

Its subcellular location is the nucleus. It is found in the cytoplasm. Functionally, trans-acting factor that binds to glucocorticoid modulatory elements (GME) present in the TAT (tyrosine aminotransferase) promoter and increases sensitivity to low concentrations of glucocorticoids. Also binds to the transferrin receptor promoter. The sequence is that of Glucocorticoid modulatory element-binding protein 1 (Gmeb1) from Rattus norvegicus (Rat).